A 447-amino-acid polypeptide reads, in one-letter code: Trichothecene C-3 esterase (447 aa).

Residues 1-22 (MALNRLVFSLSLWLGFIGAAQA) form the signal peptide. N-linked (GlcNAc...) asparagine glycosylation is found at N59, N66, N136, and N189. The Charge relay system role is filled by S202. 3 N-linked (GlcNAc...) asparagine glycosylation sites follow: N238, N284, and N314. Catalysis depends on charge relay system residues D352 and H384. 2 N-linked (GlcNAc...) asparagine glycosylation sites follow: N389 and N423.

The protein belongs to the AB hydrolase superfamily. Lipase family.

It functions in the pathway sesquiterpene biosynthesis; trichothecene biosynthesis. Functionally, trichothecene C-3 esterase; part of the core gene cluster that mediates the biosynthesis of trichothecenes, a very large family of chemically related bicyclic sesquiterpene compounds acting as mycotoxins, including T2-toxin. The biosynthesis of trichothecenes begins with the cyclization of farnesyl diphosphate to trichodiene and is catalyzed by the trichodiene synthase TRI5. Trichodiene undergoes a series of oxygenations catalyzed by the cytochrome P450 monooxygenase TRI4. TRI4 controls the addition of four oxygens at C-2, C-3, C-11, and the C-12, C-13-epoxide to form the intermediate isotrichotriol. Isotrichotriol then undergoes a non-enzymatic isomerization and cyclization to form isotrichodermol. During this process, the oxygen at the C-2 position becomes the pyran ring oxygen and the hydroxyl group at C-11 is lost. More complex type A trichothecenes are built by modifying isotrichodermol through a series of paired hydroxylation and acetylation or acylation steps. Isotrichodermol is converted to isotrichodermin by the acetyltransferase TRI101. TRI101 encodes a C-3 transacetylase that acts as a self-protection or resistance factor during biosynthesis and that the presence of a free C-3 hydroxyl group is a key component of Fusarium trichothecene phytotoxicity. A second hydroxyl group is added to C-15 by the trichothecene C-15 hydroxylase TRI11, producing 15-decalonectrin, which is then acetylated by TRI3, producing calonectrin. A third hydroxyl group is added at C-4 by the cytochrome P450 monooxygenase TRI13, converting calonectrin to 3,15-diacetoxyspirpenol, which is subsequently acetylated by the acetyltransferase TRI7. A fourth hydroxyl group is added to C-8 by the cytochrome P450 monooxygenase TRI1, followed by the addition of an isovaleryl moiety by TRI16. Finally, the acetyl group is removed from the C-3 position by the trichothecene C-3 esterase TRI8 to produce T-2 toxin. The polypeptide is Trichothecene C-3 esterase (Fusarium sporotrichioides).